A 391-amino-acid chain; its full sequence is 8-amino-7-oxononanoate synthase (391 aa).

R20 provides a ligand contact to substrate. A pyridoxal 5'-phosphate-binding site is contributed by 106-107 (GY). H131 lines the substrate pocket. Pyridoxal 5'-phosphate contacts are provided by S178, H206, and T234. K237 bears the N6-(pyridoxal phosphate)lysine mark. Residue T353 coordinates substrate.

It belongs to the class-II pyridoxal-phosphate-dependent aminotransferase family. BioF subfamily. Homodimer. Pyridoxal 5'-phosphate serves as cofactor.

It carries out the reaction 6-carboxyhexanoyl-[ACP] + L-alanine + H(+) = (8S)-8-amino-7-oxononanoate + holo-[ACP] + CO2. It participates in cofactor biosynthesis; biotin biosynthesis. Functionally, catalyzes the decarboxylative condensation of pimeloyl-[acyl-carrier protein] and L-alanine to produce 8-amino-7-oxononanoate (AON), [acyl-carrier protein], and carbon dioxide. The protein is 8-amino-7-oxononanoate synthase of Trichlorobacter lovleyi (strain ATCC BAA-1151 / DSM 17278 / SZ) (Geobacter lovleyi).